The sequence spans 325 residues: Nod factor export ATP-binding protein I (325 aa).

The region spanning 27-257 (LELRKVRKQY…QIGCDVVEVY (231 aa)) is the ABC transporter domain. An ATP-binding site is contributed by 59 to 66 (GPNGAGKT).

It belongs to the ABC transporter superfamily. Lipooligosaccharide exporter (TC 3.A.1.102) family. As to quaternary structure, the complex is composed of two ATP-binding proteins (NodI) and two transmembrane proteins (NodJ).

Its subcellular location is the cell inner membrane. In terms of biological role, part of the ABC transporter complex NodIJ involved in the export of the nodulation factors (Nod factors), the bacterial signal molecules that induce symbiosis and subsequent nodulation induction. Nod factors are LCO (lipo-chitin oligosaccharide), a modified beta-1,4-linked N-acetylglucosamine oligosaccharide. This subunit is responsible for energy coupling to the transport system. The sequence is that of Nod factor export ATP-binding protein I from Cupriavidus pinatubonensis (strain JMP 134 / LMG 1197) (Cupriavidus necator (strain JMP 134)).